We begin with the raw amino-acid sequence, 346 residues long: Formimidoylglutamase (346 aa).

Residues H145, D180, H182, D184, D271, and D273 each contribute to the Mn(2+) site.

This sequence belongs to the arginase family. Mn(2+) serves as cofactor.

The catalysed reaction is N-formimidoyl-L-glutamate + H2O = formamide + L-glutamate. It participates in amino-acid degradation; L-histidine degradation into L-glutamate; L-glutamate from N-formimidoyl-L-glutamate (hydrolase route): step 1/1. Catalyzes the conversion of N-formimidoyl-L-glutamate to L-glutamate and formamide. In Psychrobacter cryohalolentis (strain ATCC BAA-1226 / DSM 17306 / VKM B-2378 / K5), this protein is Formimidoylglutamase.